The primary structure comprises 366 residues: S-adenosylmethionine:tRNA ribosyltransferase-isomerase (366 aa).

It belongs to the QueA family. As to quaternary structure, monomer.

The protein resides in the cytoplasm. It carries out the reaction 7-aminomethyl-7-carbaguanosine(34) in tRNA + S-adenosyl-L-methionine = epoxyqueuosine(34) in tRNA + adenine + L-methionine + 2 H(+). Its pathway is tRNA modification; tRNA-queuosine biosynthesis. Its function is as follows. Transfers and isomerizes the ribose moiety from AdoMet to the 7-aminomethyl group of 7-deazaguanine (preQ1-tRNA) to give epoxyqueuosine (oQ-tRNA). The sequence is that of S-adenosylmethionine:tRNA ribosyltransferase-isomerase from Synechococcus sp. (strain CC9605).